A 544-amino-acid polypeptide reads, in one-letter code: Glucans biosynthesis protein G 1 (544 aa).

The signal sequence occupies residues 1–33 (MVSLLRCQSFKPSSIICSLALSAAFALSGTAFA). The segment at 36–58 (SKPAENKPATPVVSPPKATAPSA) is disordered.

The protein belongs to the OpgD/OpgG family.

It is found in the periplasm. Its pathway is glycan metabolism; osmoregulated periplasmic glucan (OPG) biosynthesis. Its function is as follows. Involved in the biosynthesis of osmoregulated periplasmic glucans (OPGs). This Shewanella oneidensis (strain ATCC 700550 / JCM 31522 / CIP 106686 / LMG 19005 / NCIMB 14063 / MR-1) protein is Glucans biosynthesis protein G 1 (opgG1).